We begin with the raw amino-acid sequence, 328 residues long: ATP-dependent 6-phosphofructokinase (328 aa).

Gly11 contributes to the ATP binding site. 21 to 25 is an ADP binding site; sequence RAAVR. Residues 72-73 and 102-105 contribute to the ATP site; these read RS and GNGT. Residue Asn103 coordinates Mg(2+). 126 to 128 is a binding site for substrate; it reads TID. The Proton acceptor role is filled by Asp128. Arg155 contacts ADP. Residues Arg163 and 170–172 contribute to the substrate site; that span reads MGR. ADP is bound by residues 186–188 and 214–216; these read GAE and KAS. Substrate-binding positions include Glu223, Arg247, and 253 to 256; that span reads HVQR.

It belongs to the phosphofructokinase type A (PFKA) family. ATP-dependent PFK group I subfamily. Prokaryotic clade 'B1' sub-subfamily. As to quaternary structure, homotetramer. The cofactor is Mg(2+).

The protein resides in the cytoplasm. It catalyses the reaction beta-D-fructose 6-phosphate + ATP = beta-D-fructose 1,6-bisphosphate + ADP + H(+). The protein operates within carbohydrate degradation; glycolysis; D-glyceraldehyde 3-phosphate and glycerone phosphate from D-glucose: step 3/4. Its activity is regulated as follows. Allosterically activated by ADP and other diphosphonucleosides, and allosterically inhibited by phosphoenolpyruvate. In terms of biological role, catalyzes the phosphorylation of D-fructose 6-phosphate to fructose 1,6-bisphosphate by ATP, the first committing step of glycolysis. The protein is ATP-dependent 6-phosphofructokinase of Cytophaga hutchinsonii (strain ATCC 33406 / DSM 1761 / CIP 103989 / NBRC 15051 / NCIMB 9469 / D465).